The sequence spans 179 residues: Transcription factor 21 (179 aa).

The interval 23–87 is disordered; sequence IKLDPNKEFG…QVQRNAANAR (65 aa). Positions 34 to 46 are enriched in polar residues; it reads SNDSNEESSTCDN. The segment covering 50-64 has biased composition (basic residues); the sequence is KKGRGTSGKRRKAPS. Positions 70–80 are enriched in polar residues; it reads GNINQEGKQVQ. The bHLH domain occupies 79-131; it reads VQRNAANARERARMRVLSKAFSRLKTTLPWVPPDTKLSKLDTLRLASSYIAHL.

As to quaternary structure, efficient DNA binding requires dimerization with another bHLH protein.

Its subcellular location is the nucleus. Involved in epithelial-mesenchymal interactions in kidney and lung morphogenesis that include epithelial differentiation and branching morphogenesis. This is Transcription factor 21 (tcf21) from Xenopus tropicalis (Western clawed frog).